A 106-amino-acid polypeptide reads, in one-letter code: Transcription initiation factor IIA subunit 2 (106 aa).

This sequence belongs to the TFIIA subunit 2 family. As to quaternary structure, TFIIA is a heterodimer of the large unprocessed subunit 1 and a small subunit gamma. It was originally believed to be a heterotrimer of an alpha (p30), a beta (p20) and a gamma (p14) subunit. Forms a complex with Moonshiner/CG12721 and Trf2. In terms of tissue distribution, ubiquitous.

The protein localises to the nucleus. Its function is as follows. TFIIA is a component of the transcription machinery of RNA polymerase II and plays an important role in transcriptional activation. TFIIA in a complex with TBP mediates transcriptional activity. Part of a rhi-dependent transcription machinery that enables the generation of piRNA precursors from heterochromatin while maintaining the suppression of transposon-encoded promoters and enhancers. Forms a complex with Moonshiner/CG12721 and Trf2 which recruit transcriptional machinery to heterochromatin to initiate the bidirectional transcription of piRNA clusters, by interacting with the RDC (rhi, del and cuff) complex that binds to repressive H3K9me3 marks in the chromatin. This mechanism allows transcription to occur in piRNA clusters despite the lack of proper promoter elements and in the presence of the repressive H3K9me3 mark. This chain is Transcription initiation factor IIA subunit 2 (TfIIA-S), found in Drosophila melanogaster (Fruit fly).